Here is a 204-residue protein sequence, read N- to C-terminus: IMPACT family member YigZ (204 aa).

It belongs to the IMPACT family. As to quaternary structure, monomer.

The protein is IMPACT family member YigZ (yigZ) of Escherichia coli (strain K12).